Reading from the N-terminus, the 444-residue chain is Glutamyl-tRNA reductase (444 aa).

Substrate is bound by residues 49-52 (TCNR), S109, 114-116 (ETQ), and Q120. C50 acts as the Nucleophile in catalysis. 189 to 194 (GAGKMG) is a binding site for NADP(+).

This sequence belongs to the glutamyl-tRNA reductase family. In terms of assembly, homodimer.

It catalyses the reaction (S)-4-amino-5-oxopentanoate + tRNA(Glu) + NADP(+) = L-glutamyl-tRNA(Glu) + NADPH + H(+). The protein operates within porphyrin-containing compound metabolism; protoporphyrin-IX biosynthesis; 5-aminolevulinate from L-glutamyl-tRNA(Glu): step 1/2. Catalyzes the NADPH-dependent reduction of glutamyl-tRNA(Glu) to glutamate 1-semialdehyde (GSA). The polypeptide is Glutamyl-tRNA reductase (Bacillus cereus (strain ZK / E33L)).